Here is a 159-residue protein sequence, read N- to C-terminus: Putative phosphatidylinositol-3-phosphatase (159 aa).

An N-terminal signal peptide occupies residues M1 to G16. 4 helical membrane-spanning segments follow: residues L30–W50, A54–W74, W104–V124, and V134–A154.

It localises to the membrane. The catalysed reaction is a 1,2-diacyl-sn-glycero-3-phospho-(1D-myo-inositol-3-phosphate) + H2O = a 1,2-diacyl-sn-glycero-3-phospho-(1D-myo-inositol) + phosphate. Functionally, may be responsible for the conversion of phosphatidylinositol phosphate diacylglycerol (PIP-DAG) to phosphatidylinositol diacylglycerol (PI-DAG), making it a key enzyme in the inositol glycerophospholipid biosynthesis pathway. The protein is Putative phosphatidylinositol-3-phosphatase of Bacteroides thetaiotaomicron (strain ATCC 29148 / DSM 2079 / JCM 5827 / CCUG 10774 / NCTC 10582 / VPI-5482 / E50).